Here is a 430-residue protein sequence, read N- to C-terminus: Adenylosuccinate synthetase (430 aa).

GTP-binding positions include 12-18 and 40-42; these read GDEGKGK and GHT. The active-site Proton acceptor is the Asp13. The Mg(2+) site is built by Asp13 and Gly40. IMP-binding positions include 13 to 16, 38 to 41, Thr130, Arg144, Gln224, Thr239, and Arg303; these read DEGK and NAGH. Catalysis depends on His41, which acts as the Proton donor. Substrate is bound at residue 299–305; sequence TVTGRKR. GTP-binding positions include Arg305, 331–333, and 413–415; these read KLD and STS.

It belongs to the adenylosuccinate synthetase family. Homodimer. Mg(2+) serves as cofactor.

It is found in the cytoplasm. The catalysed reaction is IMP + L-aspartate + GTP = N(6)-(1,2-dicarboxyethyl)-AMP + GDP + phosphate + 2 H(+). Its pathway is purine metabolism; AMP biosynthesis via de novo pathway; AMP from IMP: step 1/2. Its function is as follows. Plays an important role in the de novo pathway of purine nucleotide biosynthesis. Catalyzes the first committed step in the biosynthesis of AMP from IMP. The sequence is that of Adenylosuccinate synthetase from Paracoccus denitrificans (strain Pd 1222).